We begin with the raw amino-acid sequence, 324 residues long: Putative arsenical pump-driving ATPase (324 aa).

ATP is bound at residue 21–28 (GKGGVGKT).

The protein belongs to the arsA ATPase family.

It carries out the reaction arsenite(in) + ATP + H2O = arsenite(out) + ADP + phosphate + H(+). In terms of biological role, anion-transporting ATPase. Catalyzes the extrusion of arsenite. This is Putative arsenical pump-driving ATPase from Methanothermobacter thermautotrophicus (strain ATCC 29096 / DSM 1053 / JCM 10044 / NBRC 100330 / Delta H) (Methanobacterium thermoautotrophicum).